Here is a 549-residue protein sequence, read N- to C-terminus: Zinc finger protein 18 (549 aa).

In terms of domain architecture, SCAN box spans 41–123 (RQLFRQFRYQ…TLVESLKGDP (83 aa)). One can recognise a KRAB domain in the interval 211–283 (DLGASLLPAA…YLHVNEKIPR (73 aa)). C2H2-type zinc fingers lie at residues 408-430 (PTCRECGKTFYRNSQLIFHQRTH), 436-458 (FQCTICKKAFLRSSDFVKHQRTH), 464-486 (CKCDYCGKGFSDFSGLRHHEKIH), 492-514 (YKCPICEKSFIQRSNFNRHQRVH), and 520-542 (YKCSHCGKSFSWSSSLDKHQRSH).

The protein belongs to the krueppel C2H2-type zinc-finger protein family.

The protein localises to the nucleus. Functionally, may be involved in transcriptional regulation. The chain is Zinc finger protein 18 (ZNF18) from Homo sapiens (Human).